Consider the following 230-residue polypeptide: Translation initiation factor IF-3 (230 aa).

Disordered regions lie at residues 1-21 (MAIQ…RTNR) and 184-230 (LQSQ…AAQR). The span at 193 to 208 (AAAAAAPAAAPAAGAP) shows a compositional bias: low complexity. Over residues 209-220 (APAPAPAAPAPA) the composition is skewed to pro residues. The segment covering 221–230 (PTAADPAAQR) has biased composition (low complexity).

The protein belongs to the IF-3 family. Monomer.

The protein resides in the cytoplasm. In terms of biological role, IF-3 binds to the 30S ribosomal subunit and shifts the equilibrium between 70S ribosomes and their 50S and 30S subunits in favor of the free subunits, thus enhancing the availability of 30S subunits on which protein synthesis initiation begins. In Anaeromyxobacter dehalogenans (strain 2CP-1 / ATCC BAA-258), this protein is Translation initiation factor IF-3.